The following is a 38-amino-acid chain: Photosystem II reaction center protein L (38 aa).

Residues 17–37 traverse the membrane as a helical segment; that stretch reads SLFWGLLLIFVLAILFSSYIF.

This sequence belongs to the PsbL family. PSII is composed of 1 copy each of membrane proteins PsbA, PsbB, PsbC, PsbD, PsbE, PsbF, PsbH, PsbI, PsbJ, PsbK, PsbL, PsbM, PsbT, PsbX, PsbY, PsbZ, Psb30/Ycf12, at least 3 peripheral proteins of the oxygen-evolving complex and a large number of cofactors. It forms dimeric complexes.

The protein localises to the plastid. It is found in the cyanelle thylakoid membrane. One of the components of the core complex of photosystem II (PSII). PSII is a light-driven water:plastoquinone oxidoreductase that uses light energy to abstract electrons from H(2)O, generating O(2) and a proton gradient subsequently used for ATP formation. It consists of a core antenna complex that captures photons, and an electron transfer chain that converts photonic excitation into a charge separation. This subunit is found at the monomer-monomer interface and is required for correct PSII assembly and/or dimerization. The sequence is that of Photosystem II reaction center protein L from Cyanophora paradoxa.